Consider the following 168-residue polypeptide: uncharacterized protein (168 aa).

Positions 1 to 166 (MRVLILAENE…FCGELIKILK (166 aa)) constitute a PfpI endopeptidase domain.

Belongs to the peptidase C56 family.

This is an uncharacterized protein from Archaeoglobus fulgidus (strain ATCC 49558 / DSM 4304 / JCM 9628 / NBRC 100126 / VC-16).